Here is a 332-residue protein sequence, read N- to C-terminus: Tryptophan--tRNA ligase (332 aa).

Residues 11–13 and 19–20 each bind ATP; these read TST and GN. The short motif at 12–20 is the 'HIGH' region element; sequence STGKLTLGN. Asp140 is an L-tryptophan binding site. Residues 152–154, Ile191, and 200–204 each bind ATP; these read GQD and KMSKS. The short motif at 200 to 204 is the 'KMSKS' region element; it reads KMSKS.

This sequence belongs to the class-I aminoacyl-tRNA synthetase family. As to quaternary structure, homodimer.

It localises to the cytoplasm. It carries out the reaction tRNA(Trp) + L-tryptophan + ATP = L-tryptophyl-tRNA(Trp) + AMP + diphosphate + H(+). Its function is as follows. Catalyzes the attachment of tryptophan to tRNA(Trp). The chain is Tryptophan--tRNA ligase from Mycoplasmopsis pulmonis (strain UAB CTIP) (Mycoplasma pulmonis).